An 82-amino-acid chain; its full sequence is Opistoporin-1 (82 aa).

Positions 1 to 22 are cleaved as a signal peptide; sequence MNRKLLFVTLMVTMLVMQPSEG. Positions 67 to 82 are excised as a propeptide; the sequence is EAGQMPFDEFMDILYE.

Expressed by the venom gland.

It is found in the secreted. It localises to the target cell membrane. Functionally, at high concentrations, acts as a pore former in cellular membranes and causes the leakage of the cells. At submicromolar concentrations, degranulates granulocytes and has a weak hemolytic activity against human erythrocytes. Also strongly inhibits the production of superoxide anions. Has a strong antibacterial activity against Gram-negative bacteria but is less active against Gram-positive bacteria. Also has antifungal activity. The chain is Opistoporin-1 from Opistophthalmus carinatus (African yellow leg scorpion).